We begin with the raw amino-acid sequence, 635 residues long: MNVIKSRRPAVSPEIDPSTLSNYQNFAVSNTELFLDVLFDEKIVAGTVLYHLEVLNKDVSEVILDTSFLTVESVTVNGSEAEFSLHERVEPLGSRLAISIPPNSQKVQLFISFRTTERCTAIQFLDKEATDGKKAPYLFCQCQAIHARSLFPCFDTPALKSTYKLSAKSPLFTLMSGRPVNQEGDMYYFDQPVPIPSYLISIASGDIVKAKIGPRSDIYSEPVKIKDCQWEFENDMEDFIQIAEKLVFEYEWLRFDSLVLPSSFPYGGMEIPNLCQLTPTLICKDRSQVTVMAHELAHSWSGNLVTNCSWEHFWLNEGWTVYIERRIIEGIATAEAIKAGKKDPFAYGESMRHFSAIIGWNDLENSIKAMGNDAERFSPLVLDLKAGEDPDDSFSTVPYEKGFNLLFLIEQTVGGKKVFDKFIPSYFKKFRYGSLDTYQFVDYLYEFFNDKKVELDSIDWESWLYKPGMPPVMPKFDTTLADECYELADEWFSAIKNNSYLKHDFSSADIKSFEPNQSVVFLDTLISYNKHKDFNWKDHVDALKLMETAYTEYDTSLNAEILFRWYMLQVSGEREEFQHKLGQWLGTVGRMKFVRPGYVLLNEVNRELAIYYFKKFESNYHPICKTMVKKDLGLV.

Substrate is bound by residues 141-143 (QCQ) and 265-270 (PYGGME). A Zn(2+)-binding site is contributed by H294. E295 functions as the Proton acceptor in the catalytic mechanism. Residues H298 and E317 each contribute to the Zn(2+) site. Catalysis depends on Y399, which acts as the Proton donor.

The protein belongs to the peptidase M1 family. Zn(2+) is required as a cofactor.

It is found in the cytoplasm. The protein resides in the nucleus. It carries out the reaction an epoxide + H2O = an ethanediol. Functionally, aminopeptidase that preferentially cleaves di- and tripeptides. Also has low epoxide hydrolase activity (in vitro). Can hydrolyze the epoxide leukotriene LTA(4) but it forms preferentially 5,6-dihydroxy-7,9,11,14-eicosatetraenoic acid rather than the cytokine leukotriene B(4) as the product compared to the homologous mammalian enzyme (in vitro). The sequence is that of Leucine aminopeptidase 2-2 (LTA4) from Scheffersomyces stipitis (strain ATCC 58785 / CBS 6054 / NBRC 10063 / NRRL Y-11545) (Yeast).